Here is a 159-residue protein sequence, read N- to C-terminus: Cyclic pyranopterin monophosphate synthase (159 aa).

Residues 75–77 (LCH) and 113–114 (ME) each bind substrate. The active site involves aspartate 128.

Belongs to the MoaC family. In terms of assembly, homohexamer; trimer of dimers.

It catalyses the reaction (8S)-3',8-cyclo-7,8-dihydroguanosine 5'-triphosphate = cyclic pyranopterin phosphate + diphosphate. Its pathway is cofactor biosynthesis; molybdopterin biosynthesis. Functionally, catalyzes the conversion of (8S)-3',8-cyclo-7,8-dihydroguanosine 5'-triphosphate to cyclic pyranopterin monophosphate (cPMP). The chain is Cyclic pyranopterin monophosphate synthase from Cupriavidus metallidurans (strain ATCC 43123 / DSM 2839 / NBRC 102507 / CH34) (Ralstonia metallidurans).